Reading from the N-terminus, the 366-residue chain is 5-hydroxytryptamine receptor 1F (366 aa).

The Extracellular portion of the chain corresponds to Met-1–Ile-24. 2 N-linked (GlcNAc...) asparagine glycosylation sites follow: Asn-5 and Asn-10. The helical transmembrane segment at Leu-25–Ile-49 threads the bilayer. At Val-50–Asn-59 the chain is on the cytoplasmic side. Residues Tyr-60 to Ile-81 traverse the membrane as a helical segment. The Extracellular portion of the chain corresponds to Val-82–Cys-96. A disulfide bond links Cys-96 and Cys-172. A helical membrane pass occupies residues Asp-97–Leu-119. 2 residues coordinate serotonin: Asp-103 and Cys-107. Residues Asp-120–Tyr-122 carry the DRY motif; important for ligand-induced conformation changes motif. Residues Asp-120–His-139 are Cytoplasmic-facing. Residues Ala-140 to Leu-159 form a helical membrane-spanning segment. Over Phe-160–His-178 the chain is Extracellular. Residues Ile-179–Tyr-202 form a helical membrane-spanning segment. Topologically, residues Lys-203–Ala-291 are cytoplasmic. The helical transmembrane segment at Ala-292–Val-315 threads the bilayer. Residues Val-316–Glu-327 lie on the Extracellular side of the membrane. The helical transmembrane segment at Met-328–Phe-350 threads the bilayer. An NPxxY motif; important for ligand-induced conformation changes and signaling motif is present at residues Asn-343 to Tyr-347. The Cytoplasmic segment spans residues Asn-351–Tyr-366.

It belongs to the G-protein coupled receptor 1 family. In terms of tissue distribution, detected in hippocampus.

The protein localises to the cell membrane. In terms of biological role, G-protein coupled receptor for 5-hydroxytryptamine (serotonin). Also functions as a receptor for various alkaloids and psychoactive substances. Ligand binding causes a conformation change that triggers signaling via guanine nucleotide-binding proteins (G proteins) and modulates the activity of downstream effectors, such as adenylate cyclase. HTR1F is coupled to G(i)/G(o) G alpha proteins and mediates inhibitory neurotransmission by inhibiting adenylate cyclase activity. The protein is 5-hydroxytryptamine receptor 1F (Htr1f) of Mus musculus (Mouse).